The sequence spans 286 residues: Glycine--tRNA ligase alpha subunit (286 aa).

It belongs to the class-II aminoacyl-tRNA synthetase family. As to quaternary structure, tetramer of two alpha and two beta subunits.

The protein localises to the cytoplasm. It carries out the reaction tRNA(Gly) + glycine + ATP = glycyl-tRNA(Gly) + AMP + diphosphate. The chain is Glycine--tRNA ligase alpha subunit from Thermotoga neapolitana (strain ATCC 49049 / DSM 4359 / NBRC 107923 / NS-E).